A 196-amino-acid chain; its full sequence is Proteasome subunit beta 1 (196 aa).

A propeptide spans 1–6 (removed in mature form; by autocatalysis); that stretch reads MEKKTG. Residue Thr7 is the Nucleophile of the active site.

The protein belongs to the peptidase T1B family. In terms of assembly, the 20S proteasome core is composed of 14 alpha and 14 beta subunits that assemble into four stacked heptameric rings, resulting in a barrel-shaped structure. The two inner rings, each composed of seven catalytic beta subunits, are sandwiched by two outer rings, each composed of seven alpha subunits. The catalytic chamber with the active sites is on the inside of the barrel. Has a gated structure, the ends of the cylinder being occluded by the N-termini of the alpha-subunits. Is capped at one or both ends by the proteasome regulatory ATPase, PAN.

The protein localises to the cytoplasm. The catalysed reaction is Cleavage of peptide bonds with very broad specificity.. With respect to regulation, the formation of the proteasomal ATPase PAN-20S proteasome complex, via the docking of the C-termini of PAN into the intersubunit pockets in the alpha-rings, triggers opening of the gate for substrate entry. Interconversion between the open-gate and close-gate conformations leads to a dynamic regulation of the 20S proteasome proteolysis activity. Component of the proteasome core, a large protease complex with broad specificity involved in protein degradation. The protein is Proteasome subunit beta 1 of Pyrococcus furiosus (strain ATCC 43587 / DSM 3638 / JCM 8422 / Vc1).